The following is a 444-amino-acid chain: Chitinase-like protein Idgf4 (444 aa).

Positions 1–22 (MKLLLILLGALLAVLTIKRTSA) are cleaved as a signal peptide. Residues 27–444 (NHLICYYDGT…ILRAIKFKFQ (418 aa)) enclose the GH18 domain. A disulfide bridge connects residues Cys-31 and Cys-58. Asn-226 is a glycosylation site (N-linked (GlcNAc...) asparagine). Cys-345 and Cys-428 form a disulfide bridge.

It belongs to the glycosyl hydrolase 18 family. IDGF subfamily. Glycosylated.

It localises to the secreted. Cooperates with insulin-like peptides to stimulate the proliferation, polarization and motility of imaginal disk cells. May act by stabilizing the binding of insulin-like peptides to its receptor through a simultaneous interaction with both molecules to form a multiprotein signaling complex. This is Chitinase-like protein Idgf4 (Idgf4) from Glossina morsitans morsitans (Savannah tsetse fly).